A 112-amino-acid polypeptide reads, in one-letter code: Nucleoid-associated protein Pfl01_1806 (112 aa).

Belongs to the YbaB/EbfC family. As to quaternary structure, homodimer.

Its subcellular location is the cytoplasm. It is found in the nucleoid. Its function is as follows. Binds to DNA and alters its conformation. May be involved in regulation of gene expression, nucleoid organization and DNA protection. In Pseudomonas fluorescens (strain Pf0-1), this protein is Nucleoid-associated protein Pfl01_1806.